A 185-amino-acid chain; its full sequence is Mitochondrial inner membrane protease atp23 (185 aa).

Residue His86 coordinates a divalent metal cation. Residue Glu87 is part of the active site. Residue His90 coordinates a divalent metal cation.

It belongs to the peptidase M76 family.

Its subcellular location is the mitochondrion inner membrane. In terms of biological role, has a dual role in the assembly of mitochondrial ATPase. Acts as a protease that removes N-terminal residues of mitochondrial ATPase CF(0) subunit 6 at the intermembrane space side. Also involved in the correct assembly of the membrane-embedded ATPase CF(0) particle, probably mediating association of subunit 6 with the subunit 9 ring. This is Mitochondrial inner membrane protease atp23 (atp23) from Schizosaccharomyces pombe (strain 972 / ATCC 24843) (Fission yeast).